We begin with the raw amino-acid sequence, 309 residues long: Tagatose-6-phosphate kinase (309 aa).

This sequence belongs to the carbohydrate kinase PfkB family. LacC subfamily.

It carries out the reaction D-tagatofuranose 6-phosphate + ATP = D-tagatofuranose 1,6-bisphosphate + ADP + H(+). It participates in carbohydrate metabolism; D-tagatose 6-phosphate degradation; D-glyceraldehyde 3-phosphate and glycerone phosphate from D-tagatose 6-phosphate: step 1/2. The sequence is that of Tagatose-6-phosphate kinase from Streptococcus pyogenes serotype M2 (strain MGAS10270).